We begin with the raw amino-acid sequence, 475 residues long: Ataxin-10 (475 aa).

Residue Arg10 is modified to Omega-N-methylarginine. Ser12 and Ser77 each carry phosphoserine. Thr82 bears the Phosphothreonine mark. Ser430 is modified (phosphoserine).

Belongs to the ataxin-10 family. Homooligomer. Interacts with GNB2. Interacts with IQCB1. Interacts with OGT. Interacts with PLK1. Polyubiquitinated. Post-translationally, phosphorylation at Ser-12 by AURKB promotes the association of ATXN10 with PLK1. Phosphorylation at Ser-77 and Thr-82 by PLK1 may play a role in the regulation of cytokinesis and may stimulate the proteasome-mediated degradation of ATXN10. In terms of tissue distribution, in high cell density areas; cerebellar cortex, dentate gyrus, hippocampus, anterior olfactory nucleus, primary olfactory cortex.

It localises to the cytoplasm. It is found in the perinuclear region. Its subcellular location is the midbody. The protein resides in the cytoskeleton. The protein localises to the cilium basal body. It localises to the microtubule organizing center. It is found in the centrosome. Its subcellular location is the centriole. Its function is as follows. May play a role in the regulation of cytokinesis. May play a role in signaling by stimulating protein glycosylation. Induces neuritogenesis by activating the Ras-MAP kinase pathway and is necessary for the survival of cerebellar neurons. Does not appear to play a major role in ciliogenesis. The chain is Ataxin-10 (Atxn10) from Mus musculus (Mouse).